Reading from the N-terminus, the 354-residue chain is MTELKNDRYLRALLRQPVDVTPVWMMRQAGRYLPEYKATRAQAGDFMSLCKNAELACEVTLQPLRRYPLDAAILFSDILTVPDAMGLGLYFEAGEGPRFTSPVTCKADVDKLPIPDPEDELGYVMNAVRTIRRELKGEVPLIGFSGSPWTLATYMVEGGSSKAFTVIKKMMYADPQALHALLDKLAKSVTLYLNAQIKAGAQAVMIFDTWGGVLTGRDYQQFSLYYMHKIVDGLLRENDGRRVPVTLFTKGGGQWLEAMAETGCDALGLDWTTDIADARRRVGNKVALQGNMDPSMLYAPPARIEEEVASILAGFGHGEGHVFNLGHGIHQDVPPEHAGVFVEAVHRLSAPYHL.

Residues 27 to 31, Asp-77, Tyr-154, Thr-209, and His-327 contribute to the substrate site; that span reads RQAGR.

Belongs to the uroporphyrinogen decarboxylase family. As to quaternary structure, homodimer.

It is found in the cytoplasm. The catalysed reaction is uroporphyrinogen III + 4 H(+) = coproporphyrinogen III + 4 CO2. The protein operates within porphyrin-containing compound metabolism; protoporphyrin-IX biosynthesis; coproporphyrinogen-III from 5-aminolevulinate: step 4/4. Catalyzes the decarboxylation of four acetate groups of uroporphyrinogen-III to yield coproporphyrinogen-III. The protein is Uroporphyrinogen decarboxylase of Escherichia coli O7:K1 (strain IAI39 / ExPEC).